Consider the following 354-residue polypeptide: MNQLKNDRYLKALLREPVDMTPVWMMRQAGRYLPEYKATRAEAGDFMALCRNADLACEVTLQPLRRYALDAAILFSDILTVPDAMGLGLSFGAGEGPKFARPIENKAQVDNLPIPDPESELQYVMNAVRTIRRELKGEVPLIGFSGSPWTLATYMVEGGSSKAFTKIKKMMYADPKILHALLDKLADSVILYLNAQIKAGAQAVMVFDTWGGVLAHNEYKEFSLRYMHKIVDGLIRENEGRKVPVTLFTKGGGLWLEAIAETGCDAVGLDWTVDIADARRRVGHKVALQGNMDPSVLYAQPERIELEVKQILAGFGQGSGHVFNLGHGIHQDVPEQSPKVFVDAVHEYSKQYHK.

Substrate-binding positions include 27–31, Asp-77, Tyr-154, Thr-209, and His-327; that span reads RQAGR.

Belongs to the uroporphyrinogen decarboxylase family. Homodimer.

The protein localises to the cytoplasm. The enzyme catalyses uroporphyrinogen III + 4 H(+) = coproporphyrinogen III + 4 CO2. Its pathway is porphyrin-containing compound metabolism; protoporphyrin-IX biosynthesis; coproporphyrinogen-III from 5-aminolevulinate: step 4/4. Functionally, catalyzes the decarboxylation of four acetate groups of uroporphyrinogen-III to yield coproporphyrinogen-III. This chain is Uroporphyrinogen decarboxylase, found in Actinobacillus pleuropneumoniae serotype 5b (strain L20).